Consider the following 424-residue polypeptide: Histidine--tRNA ligase (424 aa).

Belongs to the class-II aminoacyl-tRNA synthetase family. As to quaternary structure, homodimer.

Its subcellular location is the cytoplasm. It catalyses the reaction tRNA(His) + L-histidine + ATP = L-histidyl-tRNA(His) + AMP + diphosphate + H(+). The chain is Histidine--tRNA ligase from Desulfitobacterium hafniense (strain DSM 10664 / DCB-2).